Here is a 585-residue protein sequence, read N- to C-terminus: Bestrophin-1 (585 aa).

The Cytoplasmic segment spans residues 1 to 31 (MTITYTSQVANARLGSFSRLLLCWRGSIYKL). A10 contributes to the Ca(2+) binding site. The helical transmembrane segment at 32–51 (LYGEFFIFLLCYYIIRFIYR) threads the bilayer. Residues 52–60 (LALTEEQQL) are Extracellular-facing. Residues 61–82 (MFEKLTLYCDSYIQLIPISFVL) form a helical membrane-spanning segment. The Cytoplasmic portion of the chain corresponds to 83–237 (GFYVTLVVTR…DWISIPLVYT (155 aa)). A helical transmembrane segment spans residues 238 to 255 (QVVTVAVYSFFLTCLVGR). Over 256–274 (QFLNPAKAYPGHELDLVVP) the chain is Extracellular. The helical transmembrane segment at 275–288 (VFTFLQFFFYVGWL) threads the bilayer. Topologically, residues 289–585 (KVAEQLINPF…ALENRDEAHS (297 aa)) are cytoplasmic. Ca(2+)-binding residues include Q293, N296, D301, and D304. The auto-inhibitory segment stretch occupies residues 346–379 (PYTAASAQFRRASFMGSTFNISLNKEEMEFQPNQ).

It belongs to the anion channel-forming bestrophin (TC 1.A.46) family. Calcium-sensitive chloride channel subfamily. As to quaternary structure, interacts with YWHAG; this interaction promotes the ligand-gated L-glutamate channel activity leading to the positive regulation of NMDA glutamate receptor activity through the L-glutamate secretion.

It is found in the cell membrane. Its subcellular location is the basolateral cell membrane. It carries out the reaction chloride(in) = chloride(out). It catalyses the reaction hydrogencarbonate(in) = hydrogencarbonate(out). The catalysed reaction is 4-aminobutanoate(in) = 4-aminobutanoate(out). The enzyme catalyses L-glutamate(out) = L-glutamate(in). Ligand-gated anion channel that allows the movement of anions across cell membranes when activated by calcium (Ca2+). Allows the movement of chloride and hydrogencarbonate. Found in a partially open conformation leading to significantly smaller chloride movement. Upon F2R/PAR-1 activation, the sequestered calcium is released into the cytosol of astrocytes, leading to the (Ca2+)-dependent release of L-glutamate into the synaptic cleft that targets the neuronal postsynaptic GRIN2A/NMDAR receptor resulting in the synaptic plasticity regulation. Upon activation of the norepinephrine-alpha-1 adrenergic receptor signaling pathway, transports as well D-serine than L-glutamate in a (Ca2+)-dependent manner, leading to activation of adjacent NMDAR receptors and therefore regulates the heterosynaptic long-term depression and metaplasticity during initial memory acquisition. Releases the 4-aminobutanoate neurotransmitter in a (Ca2+)-dependent manner, and participates in its tonic release from cerebellar glial cells. The polypeptide is Bestrophin-1 (BEST1) (Macaca fascicularis (Crab-eating macaque)).